We begin with the raw amino-acid sequence, 562 residues long: Cytochrome c oxidase subunit 1 (562 aa).

The chain crosses the membrane as a helical span at residues 21-41; sequence TLYFLVLGFLALIVGSLFGPF. A Fe(II)-heme a-binding site is contributed by histidine 72. 8 helical membrane-spanning segments follow: residues 74–94, 105–125, 144–164, 187–207, 227–247, 267–287, 300–320, and 345–365; these read VLNAIVFTQLFAQAIMVYLPA, LMWLSWWMAFIGLVVAALPLL, AFYLGASVFVLSTWVSIYIVL, VVFWLMWFLASLGLVLEAVLF, LFWWTGHPIVYFWLLPAYAII, LAFLLFLLLSTPVGFHHQFAD, VLTLFVAVPSLMTAFTVAASL, and AFVAPVLGLLGFIPGGAGGIV. Cu cation contacts are provided by histidine 233, tyrosine 237, histidine 282, and histidine 283. A cross-link (1'-histidyl-3'-tyrosine (His-Tyr)) is located at residues 233-237; it reads HPIVY. Residue histidine 384 coordinates heme a3. 4 consecutive transmembrane segments (helical) span residues 385–405, 420–440, 471–491, and 527–547; these read FHLQVASLVTLTAMGSLYWLL, LGLAVVWLWFLGMMIMAVGLH, VLAGIVLLVALLLFIYGLFSV, and IGFWFAVAAILVVLAYGPTLV. A Fe(II)-heme a-binding site is contributed by histidine 386.

Belongs to the heme-copper respiratory oxidase family. It depends on heme as a cofactor. Requires Cu cation as cofactor.

The protein localises to the cell membrane. The catalysed reaction is 4 Fe(II)-[cytochrome c] + O2 + 8 H(+)(in) = 4 Fe(III)-[cytochrome c] + 2 H2O + 4 H(+)(out). It participates in energy metabolism; oxidative phosphorylation. The sequence is that of Cytochrome c oxidase subunit 1 (cbaA) from Thermus thermophilus (strain ATCC 27634 / DSM 579 / HB8).